Here is a 114-residue protein sequence, read N- to C-terminus: uncharacterized protein (114 aa).

This is an uncharacterized protein from Archaeoglobus fulgidus (strain ATCC 49558 / DSM 4304 / JCM 9628 / NBRC 100126 / VC-16).